The primary structure comprises 258 residues: PHD finger protein ALFIN-LIKE 1 (258 aa).

Positions Met1–Arg10 are enriched in basic and acidic residues. 2 disordered regions span residues Met1–Arg24 and Ser150–His200. The segment covering Gly11–Ser21 has biased composition (gly residues). Over residues His175–Lys187 the composition is skewed to basic and acidic residues. Over residues Glu188–Asp199 the composition is skewed to acidic residues. The PHD-type zinc finger occupies Glu202–Lys254.

This sequence belongs to the Alfin family. In terms of assembly, interacts with H3K4me3 and to a lesser extent with H3K4me2.

It localises to the nucleus. In terms of biological role, histone-binding component that specifically recognizes H3 tails trimethylated on 'Lys-4' (H3K4me3), which mark transcription start sites of virtually all active genes. This chain is PHD finger protein ALFIN-LIKE 1, found in Oryza sativa subsp. indica (Rice).